The following is a 609-amino-acid chain: Replication factor A protein 1 (609 aa).

Over residues 130–152 the composition is skewed to polar residues; it reads QNEQNNASAPRTGISTSTNSFYG. Positions 130 to 166 are disordered; sequence QNEQNNASAPRTGISTSTNSFYGNNAAATAPAPPPMM. Residues 192-278 constitute a DNA-binding region (OB); the sequence is WTIRARVTNK…NEYELMFERD (87 aa). Residues 477–498 form a C4-type zinc finger; the sequence is CPAADCNKKVFDQGGSWRCEKC.

Belongs to the replication factor A protein 1 family. Component of the heterotrimeric canonical replication protein A complex (RPA).

It localises to the nucleus. In terms of biological role, as part of the replication protein A (RPA/RP-A), a single-stranded DNA-binding heterotrimeric complex, may play an essential role in DNA replication, recombination and repair. Binds and stabilizes single-stranded DNA intermediates, preventing complementary DNA reannealing and recruiting different proteins involved in DNA metabolism. The chain is Replication factor A protein 1 (ssb1) from Schizosaccharomyces pombe (strain 972 / ATCC 24843) (Fission yeast).